The following is a 512-amino-acid chain: Altronate oxidoreductase (512 aa).

26-37 (VLQFGEGNFLRG) is an NAD(+) binding site.

It belongs to the mannitol dehydrogenase family. UxaB subfamily.

It carries out the reaction D-altronate + NAD(+) = keto-D-tagaturonate + NADH + H(+). Its pathway is carbohydrate metabolism; pentose and glucuronate interconversion. The polypeptide is Altronate oxidoreductase (Halalkalibacterium halodurans (strain ATCC BAA-125 / DSM 18197 / FERM 7344 / JCM 9153 / C-125) (Bacillus halodurans)).